Reading from the N-terminus, the 227-residue chain is Eukaryotic translation initiation factor NCBP (227 aa).

Residues 1 to 22 (MEPAAEKREAEQEELQQQHDEP) are compositionally biased toward basic and acidic residues. The segment at 1–43 (MEPAAEKREAEQEELQQQHDEPAVPSADDDEAEAEENERRNRE) is disordered. Acidic residues predominate over residues 27 to 36 (ADDDEAEAEE).

Belongs to the eukaryotic initiation factor 4E family. EIF4F is a multi-subunit complex, the composition of which varies with external and internal environmental conditions. It is composed of at least EIF4A, EIF4E and EIF4G. EIF4E is also known to interact with other partners. In higher plants two isoforms of EIF4F have been identified, named isoform EIF4F and isoform EIF(iso)4F. Isoform EIF4F has subunits p220 and p26, whereas isoform EIF(iso)4F has subunits p82 and p28.

Functionally, recognizes and binds the 7-methylguanosine-containing mRNA cap during an early step in the initiation of protein synthesis and facilitates ribosome binding by inducing the unwinding of the mRNAs secondary structures. This is Eukaryotic translation initiation factor NCBP (NCBP) from Oryza sativa subsp. japonica (Rice).